Reading from the N-terminus, the 895-residue chain is AP-1 complex subunit gamma (895 aa).

5 HEAT repeats span residues 130 to 166 (TAMARDISPEIEKVISHSNPYIRKKAALCAIRVLRKV), 167 to 205 (PDLTENYIPKIKALLSERNHAVILTALTLIIEICEMDST), 211 to 256 (KKMV…ILGQ), 301 to 339 (NGLKVMAINILGRFLLNRDNNIRYVALNTLSRVVNTDIQ), and 341 to 376 (VQRHRNTIVECLKDPDVSIRCRALDLIYSLVTESNI). Disordered regions lie at residues 591-687 (KQEE…MNNM), 706-733 (NNNSMGGMMNNNNNNNNNNNNNNNNNKS), and 746-770 (QLTPTPQQPQSQSQQALSPTNQTSV). Composition is skewed to low complexity over residues 604–626 (PTQTPPQQHYQQQQQQPQQQSSQ), 639–658 (QSSANSGNNNNNNNKQGGNA), 675–687 (NGNMNNNNNMNNM), 706–731 (NNNSMGGMMNNNNNNNNNNNNNNNNN), and 746–765 (QLTPTPQQPQSQSQQALSPT). Positions 775–893 (PQPLTFLVYQ…SDVPDTPLPS (119 aa)) constitute a GAE domain.

This sequence belongs to the adaptor complexes large subunit family. In terms of assembly, adaptor protein complex 1 (AP-1) is a heterotetramer composed of two large adaptins (gamma-type subunit and beta-type subunit), a medium adaptin (mu-type subunit) and a small adaptin (sigma-type subunit). Interacts with rhgA.

It localises to the golgi apparatus. The protein resides in the trans-Golgi network. It is found in the cytoplasmic vesicle. The protein localises to the clathrin-coated vesicle membrane. Its function is as follows. Subunit of clathrin-associated adaptor protein complex 1 that plays a role in protein sorting in the trans-Golgi network (TGN) and endosomes. The AP complexes mediate the recruitment of clathrin to membranes and the recognition of sorting signals within the cytosolic tails of transmembrane cargo molecules. Also involved in early steps of phagocytosis and macropinocytosis. The sequence is that of AP-1 complex subunit gamma (ap1g1) from Dictyostelium discoideum (Social amoeba).